The chain runs to 447 residues: Tubulin beta-4 chain (447 aa).

GTP is bound by residues glutamine 11, glutamate 71, serine 140, glycine 144, threonine 145, glycine 146, asparagine 206, and asparagine 228. Residue glutamate 71 coordinates Mg(2+). The segment at 428–447 is disordered; the sequence is QDATAEEYEEEEHDGEEEHA. Residues 431-447 show a composition bias toward acidic residues; sequence TAEEYEEEEHDGEEEHA.

It belongs to the tubulin family. In terms of assembly, dimer of alpha and beta chains. A typical microtubule is a hollow water-filled tube with an outer diameter of 25 nm and an inner diameter of 15 nM. Alpha-beta heterodimers associate head-to-tail to form protofilaments running lengthwise along the microtubule wall with the beta-tubulin subunit facing the microtubule plus end conferring a structural polarity. Microtubules usually have 13 protofilaments but different protofilament numbers can be found in some organisms and specialized cells. The cofactor is Mg(2+).

Its subcellular location is the cytoplasm. It is found in the cytoskeleton. Functionally, tubulin is the major constituent of microtubules, a cylinder consisting of laterally associated linear protofilaments composed of alpha- and beta-tubulin heterodimers. Microtubules grow by the addition of GTP-tubulin dimers to the microtubule end, where a stabilizing cap forms. Below the cap, tubulin dimers are in GDP-bound state, owing to GTPase activity of alpha-tubulin. In Zea mays (Maize), this protein is Tubulin beta-4 chain (TUBB4).